Consider the following 502-residue polypeptide: Glycerate kinase (502 aa).

It belongs to the glycerate kinase type-2 family.

It localises to the cytoplasm. The catalysed reaction is (R)-glycerate + ATP = (2R)-3-phosphoglycerate + ADP + H(+). In Danio rerio (Zebrafish), this protein is Glycerate kinase (glyctk).